Here is a 224-residue protein sequence, read N- to C-terminus: Thiamine-triphosphatase (224 aa).

Residue Ala2 is modified to N-acetylalanine. Positions 5-201 (LIEVERKFTP…AKLLVYLQRF (197 aa)) constitute a CYTH domain. Glu7 and Glu9 together coordinate Mg(2+). Residues Lys11, Arg55, Arg57, Lys65, and Arg125 each contribute to the substrate site. Mg(2+) contacts are provided by Asp145, Glu157, and Glu159. Position 157 (Glu157) interacts with substrate. Position 193 (Lys193) interacts with substrate.

It belongs to the ThTPase family. Monomer. It depends on Mg(2+) as a cofactor.

Its subcellular location is the cytoplasm. The enzyme catalyses thiamine triphosphate + H2O = thiamine diphosphate + phosphate + H(+). In terms of biological role, hydrolase highly specific for thiamine triphosphate (ThTP). The polypeptide is Thiamine-triphosphatase (Thtpa) (Rattus norvegicus (Rat)).